The chain runs to 515 residues: Bifunctional purine biosynthesis protein PurH (515 aa).

An MGS-like domain is found at 1 to 145; the sequence is MTKRVLISVS…KNHASVTVVV (145 aa).

It belongs to the PurH family.

It catalyses the reaction (6R)-10-formyltetrahydrofolate + 5-amino-1-(5-phospho-beta-D-ribosyl)imidazole-4-carboxamide = 5-formamido-1-(5-phospho-D-ribosyl)imidazole-4-carboxamide + (6S)-5,6,7,8-tetrahydrofolate. The catalysed reaction is IMP + H2O = 5-formamido-1-(5-phospho-D-ribosyl)imidazole-4-carboxamide. The protein operates within purine metabolism; IMP biosynthesis via de novo pathway; 5-formamido-1-(5-phospho-D-ribosyl)imidazole-4-carboxamide from 5-amino-1-(5-phospho-D-ribosyl)imidazole-4-carboxamide (10-formyl THF route): step 1/1. It participates in purine metabolism; IMP biosynthesis via de novo pathway; IMP from 5-formamido-1-(5-phospho-D-ribosyl)imidazole-4-carboxamide: step 1/1. The polypeptide is Bifunctional purine biosynthesis protein PurH (Streptococcus pneumoniae serotype 19F (strain G54)).